The sequence spans 369 residues: ATP-dependent (S)-NAD(P)H-hydrate dehydratase (369 aa).

In terms of domain architecture, YjeF C-terminal spans 14 to 356; the sequence is LFQKARKLVP…DEVHESFLTL (343 aa). Residues Gly126 and 179–185 contribute to the (6S)-NADPHX site; that span reads NVNEFSR. ATP is bound by residues 231–235 and 250–259; these read KGPHD and GGLKRSGGQG. Asp260 provides a ligand contact to (6S)-NADPHX. A compositionally biased stretch (basic and acidic residues) spans 284–306; the sequence is GEQEHSKEAENKEEVQGELESNK. The tract at residues 284–307 is disordered; the sequence is GEQEHSKEAENKEEVQGELESNKR.

It belongs to the NnrD/CARKD family. It depends on Mg(2+) as a cofactor.

The protein localises to the cytoplasm. The catalysed reaction is (6S)-NADHX + ATP = ADP + phosphate + NADH + H(+). It catalyses the reaction (6S)-NADPHX + ATP = ADP + phosphate + NADPH + H(+). Its function is as follows. Catalyzes the dehydration of the S-form of NAD(P)HX at the expense of ATP, which is converted to ADP. Together with NAD(P)HX epimerase, which catalyzes the epimerization of the S- and R-forms, the enzyme allows the repair of both epimers of NAD(P)HX, a damaged form of NAD(P)H that is a result of enzymatic or heat-dependent hydration. The chain is ATP-dependent (S)-NAD(P)H-hydrate dehydratase from Emericella nidulans (strain FGSC A4 / ATCC 38163 / CBS 112.46 / NRRL 194 / M139) (Aspergillus nidulans).